The primary structure comprises 122 residues: Photosystem II extrinsic protein U (122 aa).

A signal peptide spans 1–30 (MRWLLSILVRVVLVLCLCFAPLGIPVVARA).

This sequence belongs to the PsbU family. PSII is composed of 1 copy each of membrane proteins PsbA, PsbB, PsbC, PsbD, PsbE, PsbF, PsbH, PsbI, PsbJ, PsbK, PsbL, PsbM, PsbT, PsbX, PsbY, PsbZ, Psb30/Ycf12, peripheral proteins PsbO, CyanoQ (PsbQ), PsbU, PsbV and a large number of cofactors. It forms dimeric complexes.

It localises to the cellular thylakoid membrane. In terms of biological role, one of the extrinsic, lumenal subunits of photosystem II (PSII). PSII is a light-driven water plastoquinone oxidoreductase, using light energy to abstract electrons from H(2)O, generating a proton gradient subsequently used for ATP formation. The extrinsic proteins stabilize the structure of photosystem II oxygen-evolving complex (OEC), the ion environment of oxygen evolution and protect the OEC against heat-induced inactivation. The polypeptide is Photosystem II extrinsic protein U (Synechococcus sp. (strain JA-2-3B'a(2-13)) (Cyanobacteria bacterium Yellowstone B-Prime)).